Consider the following 342-residue polypeptide: Pyridoxal 4-dehydrogenase (342 aa).

Aspartate 56 is a catalytic residue. The active-site Proton donor is the tyrosine 61. Residue lysine 86 is part of the active site. 245–255 contacts NADP(+); it reads GVFNSGILAAP.

This sequence belongs to the aldo/keto reductase family. Homodimer.

It catalyses the reaction pyridoxal + NAD(+) = 4-pyridoxolactone + NADH + H(+). It functions in the pathway cofactor degradation; B6 vitamer degradation; 4-pyridoxate from pyridoxal: step 1/2. This chain is Pyridoxal 4-dehydrogenase (pld1), found in Microbacterium luteolum (Aureobacterium luteolum).